The primary structure comprises 1015 residues: Protein HIRA (1015 aa).

2 WD repeats span residues 11–53 (HNGK…QEDD) and 68–107 (NHLACVNCVRWSNSGMYLASGGDDKLIMVWKRATYIGPST). The residue at position 111 (Ser-111) is a Phosphoserine. WD repeat units follow at residues 129 to 168 (SHSGDVMDVAWSPHDAWLASCSVDNTVVIWNAVKFPEILA), 172 to 211 (GHSGLVKGLTWDPVGKYIASQADDRSLKVWRTLDWQLETS), 220 to 263 (GGTT…TNMD), 266 to 322 (GHRK…PLVV), and 326 to 367 (LFDK…DPLS). The interval 408 to 431 (QQQQQLDQKNATTRETSSASSVTG) is disordered. The span at 413-431 (LDQKNATTRETSSASSVTG) shows a compositional bias: polar residues. An interaction with ASF1A region spans residues 421–479 (RETSSASSVTGVVNGESLEDIRKNLLKKQVETRTADGRRRITPLCIAQLDTGDFSTAFF). An interaction with CCNA1 region spans residues 421–727 (RETSSASSVT…RLKCNREGKE (307 aa)). The tract at residues 439–475 (EDIRKNLLKKQVETRTADGRRRITPLCIAQLDTGDFS) is required for repression of histone gene transcription. Low complexity-rich tracts occupy residues 494–507 (SSPSGQQLLPLDSS) and 540–556 (ATSTPAASSPSVLTTPS). The disordered stretch occupies residues 494 to 558 (SSPSGQQLLP…PSVLTTPSKI (65 aa)). The residue at position 548 (Ser-548) is a Phosphoserine. Residue Thr-554 is modified to Phosphothreonine. At Ser-556 the chain carries Phosphoserine. Thr-575 carries the phosphothreonine modification. Ser-583, Ser-608, Ser-609, Ser-610, Ser-612, Ser-659, and Ser-673 each carry phosphoserine. Interaction with PAX3 stretches follow at residues 593–737 (KEQN…SRVL) and 738–826 (TAAG…SQIL). Positions 594–824 (EQNLVKELRS…LSGSDMTVSQ (231 aa)) are interaction with histone H2B. Over residues 603-617 (SRELESSSDSDEKVH) the composition is skewed to basic and acidic residues. Residues 603 to 623 (SRELESSSDSDEKVHLAKPSS) are disordered. The interaction with histone H4 stretch occupies residues 736–1015 (VLTAAGSCDV…QEQLDILRDK (280 aa)).

Belongs to the WD repeat HIR1 family. As to quaternary structure, interacts with CCNA1, HIRIP3 and NFU1/HIRIP5. Part of a complex which includes ASF1A, CABIN1, histone H3.3, histone H4 and UBN1. Interacts with histone H2B, histone H3-3B, PAX3 and PAX7. Post-translationally, sumoylated. In terms of processing, phosphorylated by CDK2/CCNA1 and CDK2/CCNE1 on Thr-554 in vitro. Also phosphorylated on Thr-554 in vivo. In terms of tissue distribution, expressed in cerebrum, cerebellum, heart, kidney, liver, lung and spleen.

It localises to the nucleus. The protein localises to the PML body. In terms of biological role, required for the periodic repression of histone gene transcription during the cell cycle. Cooperates with ASF1A to promote replication-independent chromatin assembly. Required for the formation of senescence-associated heterochromatin foci (SAHF) and efficient senescence-associated cell cycle exit. The protein is Protein HIRA (Hira) of Mus musculus (Mouse).